The chain runs to 141 residues: Endoribonuclease YbeY (141 aa).

Positions 107, 111, and 117 each coordinate Zn(2+).

It belongs to the endoribonuclease YbeY family. Zn(2+) is required as a cofactor.

Its subcellular location is the cytoplasm. Single strand-specific metallo-endoribonuclease involved in late-stage 70S ribosome quality control and in maturation of the 3' terminus of the 16S rRNA. This Endomicrobium trichonymphae protein is Endoribonuclease YbeY.